The primary structure comprises 1323 residues: Tetratricopeptide repeat protein 21 homolog (1323 aa).

17 TPR repeats span residues 56-89, 411-444, 580-613, 667-700, 702-735, 736-768, 770-802, 804-835, 845-878, 892-925, 927-959, 961-993, 995-1027, 1031-1064, 1203-1236, 1238-1270, and 1272-1305; these read VPLAILKGVCLVLLGKIPEAIRHLEAFSNDQNFS, ESPFYYLIASVLAKHSKDKSFENFRQHIENLIEM, SLYHLIKSKTFKKRNENDEALKTLKMALQIPKKE, HQLVIAQAQLYLTKGHTEKALAILRKIQPGQSNF, LSRIRMAEIYLEEKKDKRMFAACYRELLKVEPTP, GSYSLLGDAFMKVQEPEDAINFYEQALKMQSKD, QLAEKIGEAYVMAHLYSKAVNFYESSMNIYKDK, MRLKLANLLLRLKNYEKCEKILRAPLDREPEP, IQFLLLLAECHEMVENIPEAMKDFEKAKSLHNKI, ARICNLQAELYYRRHEFPPAIEVCKQALQFYETD, KSNLLLSRIYKDENKWTLVLQPCQAVLQVDPHN, EANLILADFYYIKSEADHAMTSYITLLNKNPLH, HALFRVVELYCRKGEHHKADEFLNSARDANPRC, AGYSVCRGRFEWYTGDQSQALRCYSRAKDSPNVV, EKCWLLMAEIYVGASKWEQAGTYLDQVLKYNCNS, RAFELYGQAKEKEQKYVEASKIYEKAFNTTNQK, and CSFGYKLAFTLLKTRRLFLCIETCQKVLDINPQY.

This sequence belongs to the TTC21 family.

The chain is Tetratricopeptide repeat protein 21 homolog from Caenorhabditis briggsae.